A 393-amino-acid polypeptide reads, in one-letter code: 4-hydroxyphenylpyruvate dioxygenase (393 aa).

The residue at position 2 (threonine 2) is an N-acetylthreonine. 2 consecutive VOC domains span residues histidine 18–lysine 149 and isoleucine 180–lysine 338. Lysine 132 is subject to N6-succinyllysine. A Fe cation-binding site is contributed by histidine 183. Residues serine 211, serine 226, and serine 250 each carry the phosphoserine modification. Fe cation is bound by residues histidine 266 and glutamate 349.

The protein belongs to the 4HPPD family. As to quaternary structure, homodimer. Fe cation is required as a cofactor.

The protein localises to the cytoplasm. It localises to the endoplasmic reticulum membrane. Its subcellular location is the golgi apparatus membrane. It catalyses the reaction 3-(4-hydroxyphenyl)pyruvate + O2 = homogentisate + CO2. Its pathway is amino-acid degradation; L-phenylalanine degradation; acetoacetate and fumarate from L-phenylalanine: step 3/6. In terms of biological role, catalyzes the conversion of 4-hydroxyphenylpyruvic acid to homogentisic acid, one of the steps in tyrosine catabolism. The protein is 4-hydroxyphenylpyruvate dioxygenase (Hpd) of Rattus norvegicus (Rat).